Consider the following 503-residue polypeptide: Chromodomain Y-like protein 2 (503 aa).

Residues 7 to 67 (YEVERIVDKR…LHLSKDKRVK (61 aa)) enclose the Chromo domain. Residues 66 to 177 (VKSGKQAGAS…GNGSHQPDLE (112 aa)) form a disordered region. Over residues 88 to 98 (RLSHRPLEPGK) the composition is skewed to basic and acidic residues. The segment covering 101-120 (PSSHKRKRVNSPLSRPKKGS) has biased composition (basic residues). Over residues 130–140 (KTVSYRTTPSG) the composition is skewed to polar residues.

As to quaternary structure, interacts (via chromo domain) with histone H3K9me3.

It localises to the nucleus. This is Chromodomain Y-like protein 2 (Cdyl2) from Mus musculus (Mouse).